The chain runs to 259 residues: Global transcriptional regulator CodY (259 aa).

Residues 1-155 (MNLLAKTRKL…GATVVGMEIL (155 aa)) are GAF domain. The segment at residues 203–222 (ASKIADRVGITRSVIVNALR) is a DNA-binding region (H-T-H motif).

This sequence belongs to the CodY family.

It localises to the cytoplasm. Functionally, DNA-binding global transcriptional regulator which is involved in the adaptive response to starvation and acts by directly or indirectly controlling the expression of numerous genes in response to nutrient availability. During rapid exponential growth, CodY is highly active and represses genes whose products allow adaptation to nutrient depletion. This Exiguobacterium sibiricum (strain DSM 17290 / CCUG 55495 / CIP 109462 / JCM 13490 / 255-15) protein is Global transcriptional regulator CodY.